Consider the following 326-residue polypeptide: Septum site-determining protein minD homolog, chloroplastic (326 aa).

Residues 1–62 (MASLRLFSTN…LAGETPRIVV (62 aa)) constitute a chloroplast transit peptide. Residue 67-74 (KGGVGKTT) participates in ATP binding.

The protein belongs to the ParA family. MinD subfamily. Homodimer. Interacts with MINE1. Binds to ARC3. Interacts with MCD1. Interacts with CDP1/PARC6.

Its subcellular location is the plastid. It localises to the chloroplast inner membrane. Its activity is regulated as follows. Stimulated ATPase activity by MINE1. Together with ARC3 and MCD1, regulates FtsZ ring positioning in chloroplasts in an ARC6-dependent manner. Calcium-dependent ATPase required for the correct placement of the plastid division site. Inhibits FtsZ filament and ring formation in the plastid. Mediates inhibition of plastid division. In cooperation with MINE1, prevents FtsZ ring formation anywhere outside of the mid-plastids. The chain is Septum site-determining protein minD homolog, chloroplastic from Arabidopsis thaliana (Mouse-ear cress).